We begin with the raw amino-acid sequence, 256 residues long: Myeloblastin (256 aa).

An N-terminal signal peptide occupies residues 1-25 (MAHRPPSPALASVLLALLLSGAARA). The propeptide occupies 26–27 (AE). The region spanning 28-248 (IVGGHEAQPH…YVDWIRSTLR (221 aa)) is the Peptidase S1 domain. An intrachain disulfide couples cysteine 56 to cysteine 72. Residues histidine 71 and aspartate 118 each act as charge relay system in the active site. Residues asparagine 129 and asparagine 174 are each glycosylated (N-linked (GlcNAc...) asparagine). Intrachain disulfides connect cysteine 152-cysteine 209, cysteine 182-cysteine 188, and cysteine 199-cysteine 224. Serine 203 functions as the Charge relay system in the catalytic mechanism. Positions 249 to 256 (RVEAKGRP) are excised as a propeptide.

It belongs to the peptidase S1 family. Elastase subfamily. As to quaternary structure, may form dimers. Interacts with CD177; the interaction tethers PRTN3 to the cell surface; the interaction is direct. Interacts with SERPINB1. Interacts with ADGRG3. In terms of tissue distribution, expressed in polymorphonuclear leukocytes (at protein level). Expressed in neutrophils (at protein level). Expressed in differentiating neutrophils.

Its subcellular location is the cytoplasmic granule. It localises to the secreted. The protein localises to the cell membrane. It is found in the membrane raft. The enzyme catalyses Hydrolysis of proteins, including elastin, by preferential cleavage: -Ala-|-Xaa- &gt; -Val-|-Xaa-.. Its activity is regulated as follows. Inhibited by phenylmethanesulfonyl fluoride (PMSF) and diisopropyl fluorophosphate (DFP). Serine protease that degrades elastin, fibronectin, laminin, vitronectin, and collagen types I, III, and IV (in vitro). By cleaving and activating receptor F2RL1/PAR-2, enhances endothelial cell barrier function and thus vascular integrity during neutrophil transendothelial migration. Plays a role in neutrophil transendothelial migration, probably when associated with CD177. Triggers inflammatory processes in neutrophils by interacting with ADGRG3 upstream of F2RL1/PAR2 activation. This is Myeloblastin (PRTN3) from Homo sapiens (Human).